Reading from the N-terminus, the 155-residue chain is MLKKKKTEVYALGEHISMSADKARRVIDQIRGRSYEETLMILELMPYRACYPILKLVYSAAANASYNMGSSEANLVISKAEVNGGTTVKKLKPRARGRSFPIKRSTCHITIVMKDISLNDEYVKMNSLKKTRWKKKSTAMTYHDMYNSGGLWDKK.

It belongs to the universal ribosomal protein uL22 family. In terms of assembly, part of the 50S ribosomal subunit.

Its subcellular location is the plastid. It is found in the chloroplast. This protein binds specifically to 23S rRNA. Functionally, the globular domain of the protein is located near the polypeptide exit tunnel on the outside of the subunit, while an extended beta-hairpin is found that lines the wall of the exit tunnel in the center of the 70S ribosome. This chain is Large ribosomal subunit protein uL22c (rpl22), found in Atropa belladonna (Belladonna).